We begin with the raw amino-acid sequence, 388 residues long: Alanine racemase 3 (388 aa).

The active-site Proton acceptor; specific for D-alanine is the K41. An N6-(pyridoxal phosphate)lysine modification is found at K41. Residue R135 participates in substrate binding. Y256 acts as the Proton acceptor; specific for L-alanine in catalysis. M304 is a substrate binding site.

The protein belongs to the alanine racemase family. The cofactor is pyridoxal 5'-phosphate.

It carries out the reaction L-alanine = D-alanine. The protein operates within amino-acid biosynthesis; D-alanine biosynthesis; D-alanine from L-alanine: step 1/1. In terms of biological role, catalyzes the interconversion of L-alanine and D-alanine. May also act on other amino acids. This chain is Alanine racemase 3 (alr3), found in Mesorhizobium japonicum (strain LMG 29417 / CECT 9101 / MAFF 303099) (Mesorhizobium loti (strain MAFF 303099)).